The following is a 1228-amino-acid chain: Myosin-1 (1228 aa).

Residues 1-27 (MAVTKRAGRRAQGGTQPAKGAQGVKKA) form a disordered region. Residues 37-716 (VGVSDLTLLS…TLFALEHMRD (680 aa)) form the Myosin motor domain. 130–137 (GESGAGKT) contacts ATP. At Ser-358 the chain carries Phosphoserine. The segment at 405 to 487 (TIGILDIYGF…PGIFAALNDA (83 aa)) is actin-binding. 2 consecutive IQ domains span residues 720–740 (HNMA…KTEC) and 741–768 (AIKI…SGHK). The 187-residue stretch at 776–962 (RRTYSLIGYR…SGSVQVPPGA (187 aa)) folds into the TH1 domain. Disordered regions lie at residues 953–1040 (SGSV…AESA), 1053–1109 (QSLV…PAAP), and 1169–1228 (QGGA…DDDW). Over residues 1053 to 1063 (QSLVNPRSGQG) the composition is skewed to polar residues. Residues 1064–1092 (QQQQQHHQAYQQPTAAQPAATSYSPAPAK) show a composition bias toward low complexity. Residues 1093–1106 (AAPPPPPPAPPAAP) show a composition bias toward pro residues. The SH3 domain occupies 1109–1170 (PAEPTYKALY…PAAYLEEVQG (62 aa)). The span at 1180-1194 (PTAGGASAGASLAEA) shows a compositional bias: low complexity.

The protein belongs to the TRAFAC class myosin-kinesin ATPase superfamily. Myosin family. In terms of processing, phosphorylation of the TEDS site (Ser-358) is required for the polarization of the actin cytoskeleton. Phosphorylation probably activates the myosin-I ATPase activity.

The protein resides in the cytoplasm. It localises to the cytoskeleton. The protein localises to the actin patch. In terms of biological role, type-I myosin implicated in the organization of the actin cytoskeleton. Required for proper actin cytoskeleton polarization. At the cell cortex, assembles in patch-like structures together with proteins from the actin-polymerizing machinery and promotes actin assembly. Functions as actin nucleation-promoting factor (NPF) for the Arp2/3 complex. This chain is Myosin-1 (MYO1), found in Yarrowia lipolytica (strain CLIB 122 / E 150) (Yeast).